A 94-amino-acid chain; its full sequence is MKRVHVIVEGRVQGVGFRYFVQHEALKRQLTGWVKNNDDGTVEMEAQGHESAVQLFLDTIEAGTMFAKVSRMHIEQRDVRPDEKQFRIMYGGGL.

Positions 3–90 constitute an Acylphosphatase-like domain; the sequence is RVHVIVEGRV…PDEKQFRIMY (88 aa). Active-site residues include Arg18 and Asn36.

This sequence belongs to the acylphosphatase family.

The catalysed reaction is an acyl phosphate + H2O = a carboxylate + phosphate + H(+). The sequence is that of Acylphosphatase (acyP) from Geobacillus thermodenitrificans (strain NG80-2).